The primary structure comprises 306 residues: Ribonuclease Z (306 aa).

Residues His-63, His-65, Asp-67, His-68, His-141, Asp-208, and His-266 each coordinate Zn(2+). Asp-67 acts as the Proton acceptor in catalysis.

This sequence belongs to the RNase Z family. In terms of assembly, homodimer. Zn(2+) serves as cofactor.

The catalysed reaction is Endonucleolytic cleavage of RNA, removing extra 3' nucleotides from tRNA precursor, generating 3' termini of tRNAs. A 3'-hydroxy group is left at the tRNA terminus and a 5'-phosphoryl group is left at the trailer molecule.. In terms of biological role, zinc phosphodiesterase, which displays some tRNA 3'-processing endonuclease activity. Probably involved in tRNA maturation, by removing a 3'-trailer from precursor tRNA. This is Ribonuclease Z from Protochlamydia amoebophila (strain UWE25).